Reading from the N-terminus, the 655-residue chain is HDA1 complex subunit 3 (655 aa).

Positions His-482–Thr-632 form a coiled coil. The segment at Arg-635–Val-655 is disordered. A compositionally biased stretch (basic residues) spans Thr-643–Val-655.

It belongs to the HDA2/3 family. HDA3 subfamily. Heterodimer with HDA2. Component of the HDA1 histone deacetylase complex composed of at least one HDA1 homodimer and one HDA2/HDA3 heterodimer. Interacts with HDA1 and HDA3.

It is found in the nucleus. Its function is as follows. Required for activity of HDA1 histone deacetylase complex. The HDA1 histone deacetylase complex is responsible for the deacetylation of lysine residues on the N-terminal part of the core histones (H2A, H2B, H3 and H4). Histone deacetylation gives a tag for epigenetic repression and plays an important role in transcriptional regulation, cell cycle progression and developmental events. The polypeptide is HDA1 complex subunit 3 (HDA3) (Saccharomyces cerevisiae (strain ATCC 204508 / S288c) (Baker's yeast)).